The chain runs to 243 residues: 1-(5-phosphoribosyl)-5-[(5-phosphoribosylamino)methylideneamino] imidazole-4-carboxamide isomerase (243 aa).

The Proton acceptor role is filled by D8. Catalysis depends on D129, which acts as the Proton donor.

It belongs to the HisA/HisF family.

The protein resides in the cytoplasm. The catalysed reaction is 1-(5-phospho-beta-D-ribosyl)-5-[(5-phospho-beta-D-ribosylamino)methylideneamino]imidazole-4-carboxamide = 5-[(5-phospho-1-deoxy-D-ribulos-1-ylimino)methylamino]-1-(5-phospho-beta-D-ribosyl)imidazole-4-carboxamide. It participates in amino-acid biosynthesis; L-histidine biosynthesis; L-histidine from 5-phospho-alpha-D-ribose 1-diphosphate: step 4/9. This is 1-(5-phosphoribosyl)-5-[(5-phosphoribosylamino)methylideneamino] imidazole-4-carboxamide isomerase from Carboxydothermus hydrogenoformans (strain ATCC BAA-161 / DSM 6008 / Z-2901).